The sequence spans 413 residues: MNISIESQLINYCLLFFTVVIIPIFYYIYKIVYLYLSHKLRESLINTSARIFKENESFVKQIIFTITDGVGNLRQDIMDHLQYRQTCNSIKYIVDKVFVLIDNISAIYSNTPVENYNYQYCDNITPVQPLGCGAYCPYYQPYDATFNPDCNLNYDTIYNFDFDKDIIKCDNTSECSETNETNKNTSHKLKFEYPKRCRKSRRNSRVFSRNFLKTKKSRENNSKTSTTEPFACTKDETTGMYTIKSNAYDTKNSTETNSDNNSEIVSETNSETNYSTPTTAKVNIDDVLAAMTTVYDKSDFGLNDKIKENVADSLKKMCDSSGNIKVDFDDQKLFKTVFDSVYQGLMTDPSIVDNSGYSSPTNESLNGSLTETLNESLNGSFDNSINNIKETLNKSLMDFIDCPSGSINFSNKN.

The chain crosses the membrane as a helical span at residues 14–34; sequence LLFFTVVIIPIFYYIYKIVYL. N-linked (GlcNAc...) asparagine; by host glycosylation is found at Asn46, Asn55, Asn103, Asn171, Asn179, Asn184, Asn220, Asn252, Asn260, Asn273, Asn362, Asn366, Asn374, Asn378, Asn393, and Asn408. The segment covering 250–263 has biased composition (low complexity); it reads TKNSTETNSDNNSE. The segment at 250–277 is disordered; it reads TKNSTETNSDNNSEIVSETNSETNYSTP. Residues 264–277 show a composition bias toward polar residues; it reads IVSETNSETNYSTP.

Its subcellular location is the membrane. This is an uncharacterized protein from Acanthamoeba polyphaga (Amoeba).